Reading from the N-terminus, the 348-residue chain is Dihydroorotase (348 aa).

His-17 and His-19 together coordinate Zn(2+). Substrate-binding positions include 19–21 and Asn-45; that span reads HLR. 3 residues coordinate Zn(2+): Lys-103, His-140, and His-178. N6-carboxylysine is present on Lys-103. His-140 provides a ligand contact to substrate. Leu-223 contributes to the substrate binding site. Asp-251 is a Zn(2+) binding site. Residue Asp-251 is part of the active site. His-255 and Ala-267 together coordinate substrate.

This sequence belongs to the metallo-dependent hydrolases superfamily. DHOase family. Class II DHOase subfamily. As to quaternary structure, homodimer. The cofactor is Zn(2+).

The enzyme catalyses (S)-dihydroorotate + H2O = N-carbamoyl-L-aspartate + H(+). It functions in the pathway pyrimidine metabolism; UMP biosynthesis via de novo pathway; (S)-dihydroorotate from bicarbonate: step 3/3. Catalyzes the reversible cyclization of carbamoyl aspartate to dihydroorotate. This is Dihydroorotase from Salmonella typhi.